Reading from the N-terminus, the 483-residue chain is Glutamyl-tRNA(Gln) amidotransferase subunit A (483 aa).

Active-site charge relay system residues include Lys-76 and Ser-151. Ser-175 functions as the Acyl-ester intermediate in the catalytic mechanism.

Belongs to the amidase family. GatA subfamily. Heterotrimer of A, B and C subunits.

It catalyses the reaction L-glutamyl-tRNA(Gln) + L-glutamine + ATP + H2O = L-glutaminyl-tRNA(Gln) + L-glutamate + ADP + phosphate + H(+). Allows the formation of correctly charged Gln-tRNA(Gln) through the transamidation of misacylated Glu-tRNA(Gln) in organisms which lack glutaminyl-tRNA synthetase. The reaction takes place in the presence of glutamine and ATP through an activated gamma-phospho-Glu-tRNA(Gln). The polypeptide is Glutamyl-tRNA(Gln) amidotransferase subunit A (Pseudomonas savastanoi pv. phaseolicola (strain 1448A / Race 6) (Pseudomonas syringae pv. phaseolicola (strain 1448A / Race 6))).